The sequence spans 47 residues: Protein YtiD (47 aa).

The chain is Protein YtiD (ytiD) from Escherichia coli (strain K12).